Consider the following 203-residue polypeptide: Transmembrane emp24 domain-containing protein (203 aa).

Positions 1-22 (MASIRLLPSCIVLMFLARSSLC) are cleaved as a signal peptide. Residues 23–170 (YFITIDAHGE…RSINDNTNSR (148 aa)) lie on the Lumenal side of the membrane. Residues 32–114 (EECFHDKVTS…PKVLKFSMDI (83 aa)) enclose the GOLD domain. Residues 171–191 (VVWWSFFESLVLVAMTLGQVY) traverse the membrane as a helical segment. Residues 192-203 (YLKRFFEVRRVV) lie on the Cytoplasmic side of the membrane.

Belongs to the EMP24/GP25L family.

Its subcellular location is the cytoplasmic vesicle membrane. Could have a role in the budding of coatomer-coated and other species of coated vesicles. The sequence is that of Transmembrane emp24 domain-containing protein from Nematostella vectensis (Starlet sea anemone).